The following is a 459-amino-acid chain: Putative flavin-containing monooxygenase 2 (459 aa).

FAD is bound by residues 17-21 (GAGVS), E38, and 46-47 (VW). 217-220 (SAID) provides a ligand contact to NADP(+).

The protein belongs to the FMO family. Requires FAD as cofactor.

In Arabidopsis thaliana (Mouse-ear cress), this protein is Putative flavin-containing monooxygenase 2 (FMO2).